The sequence spans 438 residues: Serine/threonine exchanger SteT (438 aa).

Topologically, residues M1 to E11 are cytoplasmic. A helical transmembrane segment spans residues I12–M32. Topologically, residues K33–K45 are extracellular. The chain crosses the membrane as a helical span at residues M46–A66. The Cytoplasmic segment spans residues E67 to Q98. A helical membrane pass occupies residues I99–A119. The Extracellular portion of the chain corresponds to N120–S126. A helical transmembrane segment spans residues G127–G147. Topologically, residues T148–G151 are cytoplasmic. A helical transmembrane segment spans residues G152–F172. The Extracellular segment spans residues G173–N193. The helical transmembrane segment at F194–L214 threads the bilayer. Residues G215–T230 lie on the Cytoplasmic side of the membrane. The chain crosses the membrane as a helical span at residues G231–L251. The Extracellular portion of the chain corresponds to S252–T269. The helical transmembrane segment at M270–G290 threads the bilayer. At C291–T327 the chain is on the cytoplasmic side. Residues P328–P348 traverse the membrane as a helical segment. Topologically, residues D349–S352 are extracellular. The chain crosses the membrane as a helical span at residues E353–L373. Residues R374–L388 lie on the Cytoplasmic side of the membrane. Residues Y389–I409 form a helical membrane-spanning segment. At T410–D411 the chain is on the extracellular side. Residues T412–M432 form a helical membrane-spanning segment. The Cytoplasmic portion of the chain corresponds to K433 to S438.

This sequence belongs to the amino acid-polyamine-organocation (APC) superfamily. L-type amino acid transporter (LAT) (TC 2.A.3.8) family. In terms of assembly, monomer.

It is found in the cell membrane. Exhibits an obligate exchange activity for serine, threonine and aromatic amino acids. The sequence is that of Serine/threonine exchanger SteT (steT) from Bacillus subtilis (strain 168).